Reading from the N-terminus, the 161-residue chain is Nucleotide-binding protein Bcep1808_2648 (161 aa).

The protein belongs to the YajQ family.

Functionally, nucleotide-binding protein. The sequence is that of Nucleotide-binding protein Bcep1808_2648 from Burkholderia vietnamiensis (strain G4 / LMG 22486) (Burkholderia cepacia (strain R1808)).